The chain runs to 396 residues: MAKEKFARTKPHVNIGTIGHVDHGKTTLTAAITKVMAAAGRAEFRAYDQIDGAPEERERGITISTAHVEYETEARHYAHVDCPGHADYVKNMITGAAQMDGGILVVSAADGPMPQTREHILLARQVGVPALVVFLNKVDQVDDEELLELVEMEVRELLSSYDFPGDDIPVIKGSALKALEGEESEMGVDAINRLMDAVDAYIPEPERPLDQAFLMPIEDVFTISGRGTVVTGRIERGIVKVGEQVAIIGIKDTVVTTCTGVEMFRKLLDQGQAGDNVGVLLRGTKREDVQRGQVLAAPNSIKPHTKFNAESYILTKEEGGRHTPFFSNYRPQFYFRTTDVTGVLKLPEGVEMVMPGDNITMEVELIAPIAMEKGLRFAIREGGRTVGAGVVAEVID.

The 197-residue stretch at 10 to 206 (KPHVNIGTIG…AVDAYIPEPE (197 aa)) folds into the tr-type G domain. Residues 19–26 (GHVDHGKT) are G1. 19 to 26 (GHVDHGKT) serves as a coordination point for GTP. Thr26 is a binding site for Mg(2+). The tract at residues 60 to 64 (GITIS) is G2. Residues 81–84 (DCPG) are G3. Residues 81 to 85 (DCPGH) and 136 to 139 (NKVD) contribute to the GTP site. A G4 region spans residues 136–139 (NKVD). The interval 174-176 (SAL) is G5.

The protein belongs to the TRAFAC class translation factor GTPase superfamily. Classic translation factor GTPase family. EF-Tu/EF-1A subfamily. In terms of assembly, monomer.

The protein resides in the cytoplasm. It carries out the reaction GTP + H2O = GDP + phosphate + H(+). In terms of biological role, GTP hydrolase that promotes the GTP-dependent binding of aminoacyl-tRNA to the A-site of ribosomes during protein biosynthesis. In Magnetococcus marinus (strain ATCC BAA-1437 / JCM 17883 / MC-1), this protein is Elongation factor Tu.